Consider the following 393-residue polypeptide: S-adenosylmethionine synthase 4 (393 aa).

A Mg(2+)-binding site is contributed by E9. H15 lines the ATP pocket. E43 is a K(+) binding site. L-methionine-binding residues include E56 and Q99. ATP is bound by residues 167 to 169 (DGK), 235 to 238 (SGRF), D246, 252 to 253 (RK), A269, K273, and K277. An L-methionine-binding site is contributed by D246. K277 serves as a coordination point for L-methionine.

The protein belongs to the AdoMet synthase family. Homotetramer. Requires Mn(2+) as cofactor. It depends on Mg(2+) as a cofactor. Co(2+) serves as cofactor. The cofactor is K(+).

The protein localises to the cytoplasm. The catalysed reaction is L-methionine + ATP + H2O = S-adenosyl-L-methionine + phosphate + diphosphate. It functions in the pathway amino-acid biosynthesis; S-adenosyl-L-methionine biosynthesis; S-adenosyl-L-methionine from L-methionine: step 1/1. Functionally, catalyzes the formation of S-adenosylmethionine from methionine and ATP. The reaction comprises two steps that are both catalyzed by the same enzyme: formation of S-adenosylmethionine (AdoMet) and triphosphate, and subsequent hydrolysis of the triphosphate. This chain is S-adenosylmethionine synthase 4 (METK4), found in Vitis vinifera (Grape).